The primary structure comprises 125 residues: NADH dehydrogenase [ubiquinone] 1 beta subcomplex subunit 8, mitochondrial (125 aa).

Residues 1–29 constitute a mitochondrion transit peptide; sequence MAGRLSGVASRIMGGNGVVARSVGSSLRQ. The helical transmembrane segment at 78–98 threads the bilayer; the sequence is ALAWLSGGLGFFVGLGLLAVL.

This sequence belongs to the complex I NDUFB8 subunit family. As to quaternary structure, complex I is composed of at least 49 different subunits.

The protein localises to the mitochondrion inner membrane. In terms of biological role, accessory subunit of the mitochondrial membrane respiratory chain NADH dehydrogenase (Complex I), that is believed not to be involved in catalysis. Complex I functions in the transfer of electrons from NADH to the respiratory chain. The immediate electron acceptor for the enzyme is believed to be ubiquinone. This is NADH dehydrogenase [ubiquinone] 1 beta subcomplex subunit 8, mitochondrial from Arabidopsis thaliana (Mouse-ear cress).